Here is a 562-residue protein sequence, read N- to C-terminus: MSGTILENLSGRKLSILVATLLLCQVLCFLLGGLYAPLPAGHVTVLGSLCREDHARQNDTGFLLYSRGAGACIPVTREEVEQDSTKMANELVHVFQMPLPRDLRDLDYSRWQQNLIGVLQVEFGYDSSSELREPPRELQLTIDMRLAYRNKGDPDNGWKLYAHGVEHRYLDCVTSHVGPTETLYSCDMIPLFELGALHHSFYLLNLRFPLDTPSQMNLQFGHMHDLTLTAIHQNGGFTQIWLLLKTMLFPFVVGIMIWFWRRVHLLQRSPALLEYMLIYLGAALTFLNLPLEYLSLVYEMPYMLLLSDIRQGIFYAMLLTFWLVFAGEHMLIQDAPNKSTIRSRYWKHLSAVVVGCISLFVFDICERGVQLRNPFYSIWTTPLGAKVAMTFIVLAGVSAAIYFLFLCYMIWKVFRNIGDKRTSLPSMSQARRLHYEGLIYRFKFLMLATLVCAALTVAGFIMGQMAEGQWDWNDNVAIQPTSAFLTGVYGMWNIYIFALLILYAPSHKQWPAMHHSDETTQSNENIVASAASEEIEFSHLPSDSNPSEISSLTSFTRKVAFD.

Topologically, residues 1–13 are cytoplasmic; it reads MSGTILENLSGRK. The chain crosses the membrane as a helical span at residues 14–34; that stretch reads LSILVATLLLCQVLCFLLGGL. Residues 35–239 lie on the Lumenal side of the membrane; it reads YAPLPAGHVT…AIHQNGGFTQ (205 aa). The N-linked (GlcNAc...) asparagine glycan is linked to asparagine 58. The chain crosses the membrane as a helical span at residues 240–260; that stretch reads IWLLLKTMLFPFVVGIMIWFW. At 261-270 the chain is on the cytoplasmic side; sequence RRVHLLQRSP. The helical transmembrane segment at 271 to 291 threads the bilayer; that stretch reads ALLEYMLIYLGAALTFLNLPL. The Lumenal portion of the chain corresponds to 292–311; sequence EYLSLVYEMPYMLLLSDIRQ. Residues 312 to 332 form a helical membrane-spanning segment; that stretch reads GIFYAMLLTFWLVFAGEHMLI. The Cytoplasmic portion of the chain corresponds to 333-344; it reads QDAPNKSTIRSR. The chain crosses the membrane as a helical span at residues 345-365; sequence YWKHLSAVVVGCISLFVFDIC. Residues 366 to 390 are Lumenal-facing; it reads ERGVQLRNPFYSIWTTPLGAKVAMT. Residues 391–411 traverse the membrane as a helical segment; the sequence is FIVLAGVSAAIYFLFLCYMIW. Residues 412-441 lie on the Cytoplasmic side of the membrane; that stretch reads KVFRNIGDKRTSLPSMSQARRLHYEGLIYR. A helical membrane pass occupies residues 442–462; the sequence is FKFLMLATLVCAALTVAGFIM. The Lumenal portion of the chain corresponds to 463–482; it reads GQMAEGQWDWNDNVAIQPTS. A helical transmembrane segment spans residues 483-503; sequence AFLTGVYGMWNIYIFALLILY. Residues 504-562 lie on the Cytoplasmic side of the membrane; sequence APSHKQWPAMHHSDETTQSNENIVASAASEEIEFSHLPSDSNPSEISSLTSFTRKVAFD.

The protein belongs to the wntless family. In terms of assembly, interacts with wg; in the Golgi. Interacts with Vps35, a component of the retromer complex; wls stability is regulated by Vps35.

It localises to the presynaptic cell membrane. Its subcellular location is the postsynaptic cell membrane. The protein localises to the cell membrane. The protein resides in the endoplasmic reticulum membrane. It is found in the endosome membrane. It localises to the golgi apparatus membrane. Its function is as follows. A segment polarity gene required for wingless (wg)-dependent patterning processes, acting in both wg-sending cells and wg-target cells. In non-neuronal cells wls directs wg secretion. The wls traffic loop encompasses the Golgi, the cell surface, an endocytic compartment and a retrograde route leading back to the Golgi, and involves clathrin-mediated endocytosis and the retromer complex (a conserved protein complex consisting of Vps35 and Vps26). In neuronal cells (the larval motorneuron NMJ), the wg signal moves across the synapse via the release of wls-containing exosome-like vesicles. Postsynaptic wls is required for the trafficking of fz2 through the fz2-interacting protein Grip. This Drosophila sechellia (Fruit fly) protein is Protein wntless.